Consider the following 313-residue polypeptide: Chemotaxis protein CheV2 (313 aa).

Residues 16–172 (EAQFLCFRLD…VEKMISDVFP (157 aa)) enclose the CheW-like domain. The Response regulatory domain maps to 193 to 313 (LILIAEDSLS…IHEMLKKTLS (121 aa)). Residue Asp-246 is modified to 4-aspartylphosphate.

In terms of processing, phosphorylated; probably by transfer of CheAY phosphate group.

Functionally, plays a role in chemotaxis signal transduction system in order to colonize the host stomach. May act as a phosphate sink to control the flow of phosphate to CheAY. The chain is Chemotaxis protein CheV2 from Helicobacter pylori (strain ATCC 700392 / 26695) (Campylobacter pylori).